The following is a 60-amino-acid chain: Large ribosomal subunit protein bL32 (60 aa).

It belongs to the bacterial ribosomal protein bL32 family.

This is Large ribosomal subunit protein bL32 from Ruminiclostridium cellulolyticum (strain ATCC 35319 / DSM 5812 / JCM 6584 / H10) (Clostridium cellulolyticum).